Reading from the N-terminus, the 2845-residue chain is Multiple epidermal growth factor-like domains protein 8 (2845 aa).

The N-terminal stretch at 1–27 (MALGKVLAMALVLALAVLGSLSPGARA) is a signal peptide. Residues 28 to 2647 (GDCKGQRQVL…FFRQDQAHID (2620 aa)) lie on the Extracellular side of the membrane. Disulfide bonds link cysteine 30–cysteine 57, cysteine 142–cysteine 152, cysteine 146–cysteine 158, cysteine 174–cysteine 184, cysteine 178–cysteine 191, and cysteine 193–cysteine 202. The 111-residue stretch at 30–140 (CKGQRQVLRE…LGFNASFRFS (111 aa)) folds into the CUB 1 domain. Residue asparagine 50 is glycosylated (N-linked (GlcNAc...) asparagine). EGF-like domains are found at residues 138-168 (RFSL…GGPD) and 170-203 (GLQE…RACD). Asparagine 217 is a glycosylation site (N-linked (GlcNAc...) asparagine). Kelch repeat units lie at residues 241–287 (LLAV…AVAW), 290–338 (SLVL…AGHA), 346–399 (WLYV…FHAP), 402–453 (ALLV…FHTA), 459–511 (YMVV…APPS), and 525–575 (VLLV…SRDP). 3 consecutive PSI domains span residues 561-613 (YCSM…GDCQ), 847-899 (SCTS…TLCP), and 900-947 (LCEE…EECP). A glycan (N-linked (GlcNAc...) asparagine) is linked at asparagine 1048. One can recognise an EGF-like 3; calcium-binding domain in the interval 1074–1115 (DVDECRLGLARCHPRATCLNTPLSYECHCQRGYQGDGISHCN). Cystine bridges form between cysteine 1078/cysteine 1091, cysteine 1085/cysteine 1100, cysteine 1102/cysteine 1114, cysteine 1163/cysteine 1171, cysteine 1165/cysteine 1179, cysteine 1182/cysteine 1191, cysteine 1194/cysteine 1208, cysteine 1211/cysteine 1224, cysteine 1213/cysteine 1231, cysteine 1233/cysteine 1242, cysteine 1245/cysteine 1259, cysteine 1263/cysteine 1302, cysteine 1336/cysteine 1367, cysteine 1407/cysteine 1421, cysteine 1415/cysteine 1433, and cysteine 1435/cysteine 1444. Laminin EGF-like domains are found at residues 1163–1210 (CGCS…GCRP) and 1211–1261 (CQCN…SCFR). A CUB 2 domain is found at 1263–1405 (CGGRALLTNV…WGFNASVGSA (143 aa)). Asparagine 1271 carries N-linked (GlcNAc...) asparagine glycosylation. Position 1353 is a phosphothreonine (threonine 1353). Positions 1403 to 1445 (GSARCGSGGPGSCPVPQECVPQDGAAGAGLCRCPQGWAGPHCR) constitute an EGF-like 4 domain. 6 Kelch repeats span residues 1522–1570 (TLWM…SFHA), 1580–1626 (AMYL…HTLT), 1632–1679 (SLLL…SAVY), 1685–1735 (SLYV…VRGS), 1796–1843 (TMVV…ESVA), and 1852–1898 (RLYI…CHGA). Positions 1726-1745 (RDRMRNVRGSSRGLGQVPGE) are disordered. PSI domains lie at 1876 to 1916 (PCRL…SPCS), 1924 to 1979 (ECRR…NDCR), 2060 to 2118 (PCHL…ESCS), and 2120 to 2177 (GCAQ…LSCP). N-linked (GlcNAc...) asparagine glycosylation is present at asparagine 2066. The 39-residue stretch at 2178–2216 (PEDECANGHHDCNETQNCHDQPHGYECSCKTGYTMDNMT) folds into the EGF-like 5 domain. 2 disulfides stabilise this stretch: cysteine 2182–cysteine 2195 and cysteine 2189–cysteine 2204. The N-linked (GlcNAc...) asparagine glycan is linked to asparagine 2229. 8 cysteine pairs are disulfide-bonded: cysteine 2253-cysteine 2261, cysteine 2255-cysteine 2270, cysteine 2273-cysteine 2282, cysteine 2285-cysteine 2299, cysteine 2380-cysteine 2389, cysteine 2382-cysteine 2397, cysteine 2399-cysteine 2424, and cysteine 2427-cysteine 2441. Laminin EGF-like domains lie at 2253 to 2301 (CRCN…TCRP) and 2380 to 2443 (CQCN…QCYR). Residues 2523–2564 (TVHIQPPPAPPPPPPPADGGPRGAGDPGGAGASSGPGAPAEP) are disordered. Over residues 2527–2540 (QPPPAPPPPPPPAD) the composition is skewed to pro residues. The span at 2542–2556 (GPRGAGDPGGAGASS) shows a compositional bias: gly residues. A helical transmembrane segment spans residues 2648-2668 (LFVFFSVFFSCFFLFLSLCVL). Over 2669–2845 (LWKAKQALDQ…SQDNLTSMSL (177 aa)) the chain is Cytoplasmic. Positions 2817 to 2831 (GGGAGGSGHGTGAGR) are enriched in gly residues. The segment at 2817–2845 (GGGAGGSGHGTGAGRKGLLSQDNLTSMSL) is disordered. The segment covering 2836-2845 (SQDNLTSMSL) has biased composition (polar residues).

The protein resides in the membrane. Functionally, acts as a negative regulator of hedgehog signaling. The chain is Multiple epidermal growth factor-like domains protein 8 (MEGF8) from Homo sapiens (Human).